The sequence spans 327 residues: Glycerol-3-phosphate dehydrogenase [NAD(P)+] (327 aa).

NADPH-binding residues include S10, F11, R31, and K108. Sn-glycerol 3-phosphate is bound by residues K108, G136, and S138. NADPH is bound at residue A140. 5 residues coordinate sn-glycerol 3-phosphate: K191, D246, S256, R257, and N258. K191 functions as the Proton acceptor in the catalytic mechanism. Residue R257 coordinates NADPH. NADPH-binding residues include L281 and E283.

It belongs to the NAD-dependent glycerol-3-phosphate dehydrogenase family.

It localises to the cytoplasm. The enzyme catalyses sn-glycerol 3-phosphate + NAD(+) = dihydroxyacetone phosphate + NADH + H(+). It catalyses the reaction sn-glycerol 3-phosphate + NADP(+) = dihydroxyacetone phosphate + NADPH + H(+). Its pathway is membrane lipid metabolism; glycerophospholipid metabolism. In terms of biological role, catalyzes the reduction of the glycolytic intermediate dihydroxyacetone phosphate (DHAP) to sn-glycerol 3-phosphate (G3P), the key precursor for phospholipid synthesis. In Ehrlichia ruminantium (strain Gardel), this protein is Glycerol-3-phosphate dehydrogenase [NAD(P)+].